The chain runs to 103 residues: Co-chaperonin GroES (103 aa).

It belongs to the GroES chaperonin family. Heptamer of 7 subunits arranged in a ring. Interacts with the chaperonin GroEL.

It is found in the cytoplasm. Functionally, together with the chaperonin GroEL, plays an essential role in assisting protein folding. The GroEL-GroES system forms a nano-cage that allows encapsulation of the non-native substrate proteins and provides a physical environment optimized to promote and accelerate protein folding. GroES binds to the apical surface of the GroEL ring, thereby capping the opening of the GroEL channel. The chain is Co-chaperonin GroES from Synechococcus sp. (strain CC9902).